The following is a 482-amino-acid chain: Zinc metalloproteinase/disintegrin (482 aa).

Residues 1–20 form the signal peptide; it reads MIQVLLVTICLAAFPYQGSS. Positions 21–189 are excised as a propeptide; it reads MILESGNVND…IKASQLVVTA (169 aa). A Peptidase M12B domain is found at 197–393; that stretch reads RYIELVVVAD…HNPQCILNEP (197 aa). Positions 200 and 284 each coordinate Ca(2+). 2 disulfide bridges follow: Cys308–Cys388 and Cys348–Cys372. Zn(2+) is bound at residue His333. Residue Glu334 is part of the active site. Zn(2+)-binding residues include His337 and His343. Positions 388 and 391 each coordinate Ca(2+). Positions 394-409 are excised as a propeptide; it reads LRTDTVSTPVSGNELL. The Disintegrin domain occupies 401-482; it reads TPVSGNELLE…AGCPRNPFHA (82 aa). 6 cysteine pairs are disulfide-bonded: Cys415-Cys430, Cys417-Cys425, Cys424-Cys447, Cys438-Cys444, Cys443-Cys468, and Cys456-Cys475. A Cell attachment site motif is present at residues 460–462; the sequence is RGD.

This sequence belongs to the venom metalloproteinase (M12B) family. P-II subfamily. P-IId sub-subfamily. As to quaternary structure, homodimer; disulfide-linked (disintegrin). Zn(2+) serves as cofactor. As to expression, expressed by the venom gland.

It is found in the secreted. Functionally, this recombinant protein hydrolyzes fibronectin, but has no effect on type I gelatin and type I to V collagens. Selectively hydrolyzes the Aalpha-chain of fibrinogen (FGA), but has no effect on fibrin. In terms of biological role, inhibits ADP-induced platelet aggregation. Its function is as follows. Recombinant metalloproteinase-disintegrin Mt-d-I (393-408): hydrolyzes type I gelatin, type III and V collagens, but has no effect on type I, II, IV collagens and fibronectin. Selectively hydrolyzes the Aalpha-chain of fibrinogen, but has no effect on fibrin. May induce hemorrhage in vascular tissue. Strongly inhibits ADP-induced platelet aggregation. When concentrated, Mt-d-I undergoes autoproteolytic processing into metalloproteinase and disintegrin. The protein is Zinc metalloproteinase/disintegrin of Gloydius brevicauda (Korean slamosa snake).